The following is a 262-amino-acid chain: Indole-3-glycerol phosphate synthase (262 aa).

The protein belongs to the TrpC family.

It catalyses the reaction 1-(2-carboxyphenylamino)-1-deoxy-D-ribulose 5-phosphate + H(+) = (1S,2R)-1-C-(indol-3-yl)glycerol 3-phosphate + CO2 + H2O. It functions in the pathway amino-acid biosynthesis; L-tryptophan biosynthesis; L-tryptophan from chorismate: step 4/5. This is Indole-3-glycerol phosphate synthase from Aromatoleum aromaticum (strain DSM 19018 / LMG 30748 / EbN1) (Azoarcus sp. (strain EbN1)).